Reading from the N-terminus, the 395-residue chain is RNA demethylase ALKBH5 (395 aa).

Disordered stretches follow at residues 1-28 (MAAASGYTDLREKLKSMTSRDNYKAGSR) and 47-83 (AAEPYPVSGTTKRKYQEDSDPERSDYEEHQLQKEEEA). Residue A2 is modified to N-acetylalanine. K58 participates in a covalent cross-link: Glycyl lysine isopeptide (Lys-Gly) (interchain with G-Cter in ubiquitin). Over residues 60 to 83 (KYQEDSDPERSDYEEHQLQKEEEA) the composition is skewed to basic and acidic residues. Phosphoserine is present on residues S65 and S70. The stretch at 68 to 117 (ERSDYEEHQLQKEEEARKVKSGIRQIRLFSQDECSKIEARIDEVVSRAEK) forms a coiled coil. Y72 bears the Phosphotyrosine mark. K87 is covalently cross-linked (Glycyl lysine isopeptide (Lys-Gly) (interchain with G-Cter in SUMO1)). Phosphoserine is present on S88. K133 is subject to N6-acetyllysine. The active site involves Y140. The 2-oxoglutarate site is built by N194, Y196, and H205. C231 and C268 are joined by a disulfide. The residue at position 236 (K236) is an N6-acetyllysine. Residues H267 and R278 each coordinate 2-oxoglutarate. Residues 294–395 (ETKSLSSSTL…PTRKVKMRRH (102 aa)) form a disordered region. A compositionally biased stretch (low complexity) spans 296 to 306 (KSLSSSTLPPS). K322 participates in a covalent cross-link: Glycyl lysine isopeptide (Lys-Gly) (interchain with G-Cter in SUMO1). S326 is subject to Phosphoserine. A Glycyl lysine isopeptide (Lys-Gly) (interchain with G-Cter in SUMO2) cross-link involves residue K329. The segment covering 329–350 (KADPDAAHRPRILEMDKEENRR) has biased composition (basic and acidic residues). Position 360 is an omega-N-methylarginine (R360). Phosphoserine occurs at positions 362, 372, 375, and 385.

It belongs to the alkB family. In terms of assembly, monomer. Interacts with RBM33; promoting desumoylation by SENP1 and recruitment to N(6)-methyladenosine-containing mRNAs. Interacts (when acetylated by KAT8) with PSPC1; interaction facilitates recognition of N(6)-methyladenosine (m6A) mRNA. The cofactor is Fe(2+). Post-translationally, phosphorylated at Ser-88 and Ser-326 in response to reactive oxygen species (ROS), promoting sumoylation and inactivation. In terms of processing, acetylated by KAT8 at Lys-236, promoting interaction with PSPC1, thereby facilitating recognition of N(6)-methyladenosine (m6A) mRNA by ALKBH5. Deacetylated at Lys-236 by HDAC7. Sumoylated at Lys-87 and Lys-322 by PIAS4 following phosphorylation at Ser-88 and Ser-326 in response to reactive oxygen species (ROS), inhibiting the RNA demethylase activity. Desumoylated by SENP1; relieving RNA demethylase inhibition, leading to N(6)-methyladenosine-containing mRNAs demethylation. Post-translationally, ubiquitinated at Lys-58 via 'Lys-48'-linked polyubiquitin chain, leading to its degradation by the proteasome. Deubiquitinated at Lys-58 by USP9X, promoting its stabilizazion.

The protein resides in the nucleus speckle. The enzyme catalyses an N(6)-methyladenosine in mRNA + 2-oxoglutarate + O2 = an adenosine in mRNA + formaldehyde + succinate + CO2. Its activity is regulated as follows. RNA demethylase activity is inhibited following sumoylation. Inhibition is relieved following desumoylation. Dioxygenase that specifically demethylates N(6)-methyladenosine (m6A) RNA, the most prevalent internal modification of messenger RNA (mRNA) in higher eukaryotes. Demethylates RNA by oxidative demethylation, which requires molecular oxygen, alpha-ketoglutarate and iron. Demethylation of m6A mRNA affects mRNA processing, translation and export. Can also demethylate N(6)-methyladenosine in single-stranded DNA (in vitro). Required for the late meiotic and haploid phases of spermatogenesis by mediating m6A demethylation in spermatocytes and round spermatids: m6A demethylation of target transcripts is required for correct splicing and the production of longer 3'-UTR mRNAs in male germ cells. Involved in paraspeckle assembly, a nuclear membraneless organelle, by undergoing liquid-liquid phase separation. Paraspeckle assembly is coupled with m6A demethylation of RNAs, such as NEAT1 non-coding RNA. Also acts as a negative regulator of T-cell development: inhibits gamma-delta T-cell proliferation via demethylation of JAG1 and NOTCH2 transcripts. Inhibits regulatory T-cell (Treg) recruitment by mediating demethylation and destabilization of CCL28 mRNAs. The protein is RNA demethylase ALKBH5 (Alkbh5) of Rattus norvegicus (Rat).